The chain runs to 106 residues: Large ribosomal subunit protein uL24 (106 aa).

Residues 84–97 (EKIGRELGAKEKAR) show a composition bias toward basic and acidic residues. A disordered region spans residues 84–106 (EKIGRELGAKEKARLQKRKAAAK).

Belongs to the universal ribosomal protein uL24 family. Part of the 50S ribosomal subunit.

One of two assembly initiator proteins, it binds directly to the 5'-end of the 23S rRNA, where it nucleates assembly of the 50S subunit. Functionally, one of the proteins that surrounds the polypeptide exit tunnel on the outside of the subunit. The chain is Large ribosomal subunit protein uL24 from Anaeromyxobacter dehalogenans (strain 2CP-C).